We begin with the raw amino-acid sequence, 202 residues long: LexA repressor (202 aa).

A DNA-binding region (H-T-H motif) is located at residues 28–48 (RAEIAQRLGFRSPNAAEEHLK). Active-site for autocatalytic cleavage activity residues include S119 and K156.

This sequence belongs to the peptidase S24 family. Homodimer.

The enzyme catalyses Hydrolysis of Ala-|-Gly bond in repressor LexA.. Represses a number of genes involved in the response to DNA damage (SOS response), including recA and lexA. Binds to the 16 bp palindromic sequence 5'-CTGTATATATATACAG-3'. In the presence of single-stranded DNA, RecA interacts with LexA causing an autocatalytic cleavage which disrupts the DNA-binding part of LexA, leading to derepression of the SOS regulon and eventually DNA repair. In Enterobacter sp. (strain 638), this protein is LexA repressor.